The following is a 351-amino-acid chain: 3-dehydroquinate synthase (351 aa).

NAD(+) is bound by residues 60 to 65 (DGEEYK), 94 to 98 (GVISD), 118 to 119 (TT), lysine 131, lysine 140, and 158 to 161 (FLKT). Glutamate 173, histidine 239, and histidine 256 together coordinate Zn(2+).

The protein belongs to the sugar phosphate cyclases superfamily. Dehydroquinate synthase family. It depends on NAD(+) as a cofactor. Requires Co(2+) as cofactor. The cofactor is Zn(2+).

Its subcellular location is the cytoplasm. The catalysed reaction is 7-phospho-2-dehydro-3-deoxy-D-arabino-heptonate = 3-dehydroquinate + phosphate. Its pathway is metabolic intermediate biosynthesis; chorismate biosynthesis; chorismate from D-erythrose 4-phosphate and phosphoenolpyruvate: step 2/7. Its function is as follows. Catalyzes the conversion of 3-deoxy-D-arabino-heptulosonate 7-phosphate (DAHP) to dehydroquinate (DHQ). In Campylobacter jejuni subsp. jejuni serotype O:2 (strain ATCC 700819 / NCTC 11168), this protein is 3-dehydroquinate synthase.